The sequence spans 175 residues: Transcriptional regulator GadE (175 aa).

Residues 109–174 form the HTH luxR-type domain; it reads HKNSQLCFSH…DIVTLGITSY (66 aa). Residues 133–152 constitute a DNA-binding region (H-T-H motif); the sequence is ESNITSTLNISQQTLKIQKF.

Functionally, regulates the expression of several genes involved in acid resistance. Required for the expression of gadA and gadBC, among others, regardless of media or growth conditions. Binds directly to the 20 bp GAD box found in the control regions of both loci. Could be involved in the regulation of the genes coding for the type III secretion system in enterohaemorragic strains. The polypeptide is Transcriptional regulator GadE (gadE) (Escherichia coli O157:H7).